Reading from the N-terminus, the 471-residue chain is Glutamate--tRNA ligase (471 aa).

Positions 10 to 20 (PSPTGYLHIGG) match the 'HIGH' region motif. The Zn(2+) site is built by Cys107, Cys109, Cys134, and Glu136. The short motif at 244 to 248 (RLSKR) is the 'KMSKS' region element. Lys247 contributes to the ATP binding site.

It belongs to the class-I aminoacyl-tRNA synthetase family. Glutamate--tRNA ligase type 1 subfamily. In terms of assembly, monomer. It depends on Zn(2+) as a cofactor.

The protein localises to the cytoplasm. The catalysed reaction is tRNA(Glu) + L-glutamate + ATP = L-glutamyl-tRNA(Glu) + AMP + diphosphate. Functionally, catalyzes the attachment of glutamate to tRNA(Glu) in a two-step reaction: glutamate is first activated by ATP to form Glu-AMP and then transferred to the acceptor end of tRNA(Glu). In Anaeromyxobacter sp. (strain Fw109-5), this protein is Glutamate--tRNA ligase.